The chain runs to 77 residues: Putative neurotoxin 3 (77 aa).

Positions 1 to 25 (MKAFIAILSIAIVLLLIVSIKETSA) are cleaved as a signal peptide. The propeptide occupies 26–46 (KDCKQECVKRYTNGDLTNFLK).

Belongs to the scolopendra neurotoxin 3 family. Post-translationally, contains 2 disulfide bonds. In terms of tissue distribution, expressed by the venom gland.

The protein localises to the secreted. This chain is Putative neurotoxin 3, found in Scolopendra mutilans (Chinese red-headed centipede).